The following is an 891-amino-acid chain: Alanine--tRNA ligase (891 aa).

Histidine 564, histidine 568, cysteine 677, and histidine 681 together coordinate Zn(2+).

Belongs to the class-II aminoacyl-tRNA synthetase family. Requires Zn(2+) as cofactor.

It localises to the cytoplasm. The catalysed reaction is tRNA(Ala) + L-alanine + ATP = L-alanyl-tRNA(Ala) + AMP + diphosphate. Its function is as follows. Catalyzes the attachment of alanine to tRNA(Ala) in a two-step reaction: alanine is first activated by ATP to form Ala-AMP and then transferred to the acceptor end of tRNA(Ala). Also edits incorrectly charged Ser-tRNA(Ala) and Gly-tRNA(Ala) via its editing domain. The protein is Alanine--tRNA ligase of Rhodopseudomonas palustris (strain HaA2).